Here is a 119-residue protein sequence, read N- to C-terminus: Small ribosomal subunit protein uS10 (119 aa).

An N-acetylalanine modification is found at alanine 2. Residue lysine 4 forms a Glycyl lysine isopeptide (Lys-Gly) (interchain with G-Cter in ubiquitin) linkage. The residue at position 8 (lysine 8) is an N6-succinyllysine; alternate. Residue lysine 8 forms a Glycyl lysine isopeptide (Lys-Gly) (interchain with G-Cter in ubiquitin); alternate linkage. Threonine 9 carries the phosphothreonine modification. N6-acetyllysine is present on residues lysine 34 and lysine 75. Serine 93 carries the post-translational modification Phosphoserine.

Belongs to the universal ribosomal protein uS10 family. As to quaternary structure, component of the 40S small ribosomal subunit. Polyubiquitinated by ZNF598 via 'Lys-63'-linked ubiquitin chains when a ribosome has stalled, initiating the ribosome quality control (RQC) pathway to degrade the potentially detrimental aberrant nascent polypeptide. Deubiquitinated by OTUD3 and USP21, antagonizing ZNF598 activity. In terms of processing, ufmylated by UFL1.

It is found in the cytoplasm. Its function is as follows. Component of the small ribosomal subunit. The ribosome is a large ribonucleoprotein complex responsible for the synthesis of proteins in the cell. The sequence is that of Small ribosomal subunit protein uS10 (RPS20) from Pongo abelii (Sumatran orangutan).